We begin with the raw amino-acid sequence, 515 residues long: Protein aaim-1 (515 aa).

An N-terminal signal peptide occupies residues 1-16; it reads MRLLFFFSILYTASLC. N-linked (GlcNAc...) asparagine glycans are attached at residues Asn-46 and Asn-127. The segment at 248 to 267 is disordered; sequence RRTDPNSKFKPRPTTSQSNG. Asn-447 is a glycosylation site (N-linked (GlcNAc...) asparagine).

In terms of tissue distribution, expressed in the terminal bulb of the pharynx and the posterior of the intestine (at protein level). Expressed by intestinal cells and secreted into the intestinal lumen (at protein level).

The protein localises to the secreted. Its function is as follows. Plays a role in promoting resistance to bacterial pathogens such as P.aeruginosa by inhibiting bacterial intestinal colonization. In terms of biological role, (Microbial infection) Promotes infection by microsporidian pathogens such as N.parisii in the early larval stages of development. Involved in ensuring the proper orientation and location of the spore proteins of N.parisii during intestinal cell invasion. This Caenorhabditis elegans protein is Protein aaim-1.